A 430-amino-acid chain; its full sequence is Enolase (430 aa).

Gln165 contacts (2R)-2-phosphoglycerate. Residue Glu207 is the Proton donor of the active site. 3 residues coordinate Mg(2+): Asp244, Glu287, and Asp314. Residues Lys339, Arg368, Ser369, and Lys390 each coordinate (2R)-2-phosphoglycerate. Lys339 functions as the Proton acceptor in the catalytic mechanism.

The protein belongs to the enolase family. As to quaternary structure, component of the RNA degradosome, a multiprotein complex involved in RNA processing and mRNA degradation. The cofactor is Mg(2+).

It is found in the cytoplasm. It localises to the secreted. The protein localises to the cell surface. The enzyme catalyses (2R)-2-phosphoglycerate = phosphoenolpyruvate + H2O. Its pathway is carbohydrate degradation; glycolysis; pyruvate from D-glyceraldehyde 3-phosphate: step 4/5. In terms of biological role, catalyzes the reversible conversion of 2-phosphoglycerate (2-PG) into phosphoenolpyruvate (PEP). It is essential for the degradation of carbohydrates via glycolysis. This Xanthomonas axonopodis pv. citri (strain 306) protein is Enolase.